Reading from the N-terminus, the 237-residue chain is Class B acid phosphatase (237 aa).

Positions 1–25 (MRKITLALSAACLLFSLNNAVVARA) are cleaved as a signal peptide. Residue Asp-69 is the Nucleophile of the active site. Mg(2+)-binding residues include Asp-69 and Asp-71. The Proton donor role is filled by Asp-71. Residues 137-138 (TG) and Lys-177 each bind substrate. Position 192 (Asp-192) interacts with Mg(2+).

It belongs to the class B bacterial acid phosphatase family. As to quaternary structure, homotetramer. It depends on Mg(2+) as a cofactor.

The protein localises to the periplasm. It carries out the reaction a phosphate monoester + H2O = an alcohol + phosphate. Functionally, dephosphorylates several organic phosphate monoesters. Also has a phosphotransferase activity catalyzing the transfer of low-energy phosphate groups from organic phosphate monoesters to free hydroxyl groups of various organic compounds. The protein is Class B acid phosphatase of Enterobacter sp. (strain 638).